We begin with the raw amino-acid sequence, 223 residues long: Octanoyltransferase (223 aa).

The region spanning Asp-32 to Asp-207 is the BPL/LPL catalytic domain. Substrate-binding positions include Arg-71 to His-78, Ser-138 to Gly-140, and Gly-151 to Ala-153. The active-site Acyl-thioester intermediate is Cys-169.

Belongs to the LipB family.

Its subcellular location is the cytoplasm. The catalysed reaction is octanoyl-[ACP] + L-lysyl-[protein] = N(6)-octanoyl-L-lysyl-[protein] + holo-[ACP] + H(+). The protein operates within protein modification; protein lipoylation via endogenous pathway; protein N(6)-(lipoyl)lysine from octanoyl-[acyl-carrier-protein]: step 1/2. Functionally, catalyzes the transfer of endogenously produced octanoic acid from octanoyl-acyl-carrier-protein onto the lipoyl domains of lipoate-dependent enzymes. Lipoyl-ACP can also act as a substrate although octanoyl-ACP is likely to be the physiological substrate. This Erwinia tasmaniensis (strain DSM 17950 / CFBP 7177 / CIP 109463 / NCPPB 4357 / Et1/99) protein is Octanoyltransferase.